The primary structure comprises 556 residues: Amidophosphoribosyltransferase (556 aa).

A propeptide spanning residues 1–57 is cleaved from the precursor; the sequence is MCLAVGVGVRAPKHVPQIRRLGRAGRRLRCVTNCALGSCPIVTVQQPGRDFSSPREE. The active-site Nucleophile is the C58. Residues 58–284 enclose the Glutamine amidotransferase type-2 domain; sequence CGVFGVWAPG…PGELLAIDAD (227 aa). Residue C299 coordinates [4Fe-4S] cluster. Mg(2+) contacts are provided by S346, D408, and D409. Residues C445, C501, and C504 each coordinate [4Fe-4S] cluster.

This sequence in the C-terminal section; belongs to the purine/pyrimidine phosphoribosyltransferase family. The cofactor is Mg(2+). It depends on [4Fe-4S] cluster as a cofactor.

It catalyses the reaction 5-phospho-beta-D-ribosylamine + L-glutamate + diphosphate = 5-phospho-alpha-D-ribose 1-diphosphate + L-glutamine + H2O. The protein operates within purine metabolism; IMP biosynthesis via de novo pathway; N(1)-(5-phospho-D-ribosyl)glycinamide from 5-phospho-alpha-D-ribose 1-diphosphate: step 1/2. In terms of biological role, catalyzes the formation of phosphoribosylamine from phosphoribosylpyrophosphate (PRPP) and glutamine. This chain is Amidophosphoribosyltransferase, found in Mycobacterium leprae (strain TN).